A 238-amino-acid polypeptide reads, in one-letter code: MLRVIIVDDEQPAREDLRERLNEEHGIEIVAECSNALEAIPAIQRLQPDVVFLDIQMPRINGLELASMLNPESMPHIVFVTAYDEYAIRAFEEHAFDYLLKPLDHQRLAKTLTRLSRDLIVKNNLHKVIKPILRHIPCSGHNRIFLLKIEEVEYLSSELSGVHVVGTVQSGYTQLSLKTLEEKTPFIRCHRQYMVNTEQLGEIQLMDNGAAEVITRSGKHIPVSRRYLKSLKEKLGIA.

The Response regulatory domain maps to 3–116 (RVIIVDDEQP…RLAKTLTRLS (114 aa)). Asp-54 carries the post-translational modification 4-aspartylphosphate. In terms of domain architecture, HTH LytTR-type spans 136 to 237 (IPCSGHNRIF…LKSLKEKLGI (102 aa)).

This is an uncharacterized protein from Yersinia pestis.